The chain runs to 348 residues: MDIKQALARVAERLDLNTAEMQGVMRQIMTGQCSDAQIGAFLMGMRMKSESIDEIVGAALVMRELAAPVTIGVERLVDTCGTGGDGMNIFNVSTAAAFVVAAAGGRVAKHGNRAVSGKSGSADLLEAAGVYLELSPEQVARCVESVGVGFMFAPAHHGAMKHAIGPRRELGLRTLFNMLGPMTNPAGVKRQVLGVFSQALCRPLAEVMARLGSVHVLVVHAQDGLDEISLAAPTHIAELRNGEISEYLVQPEDFGIKSQSLIGLDIEGPQESLALIRDALGRRKTEHGQKAAEMIVLNAGAALYAADQAGSLKEGVALAHDALHTGLARDKLEELASITAVFRQENQA.

Residues glycine 81, 84 to 85 (GD), 91 to 94 (NVST), 109 to 117 (KHGNRAVSG), and serine 121 contribute to the 5-phospho-alpha-D-ribose 1-diphosphate site. Glycine 81 serves as a coordination point for anthranilate. Serine 93 contributes to the Mg(2+) binding site. Asparagine 112 serves as a coordination point for anthranilate. Anthranilate is bound at residue arginine 167. 2 residues coordinate Mg(2+): aspartate 226 and glutamate 227.

Belongs to the anthranilate phosphoribosyltransferase family. In terms of assembly, homodimer. Mg(2+) is required as a cofactor.

It catalyses the reaction N-(5-phospho-beta-D-ribosyl)anthranilate + diphosphate = 5-phospho-alpha-D-ribose 1-diphosphate + anthranilate. It functions in the pathway amino-acid biosynthesis; L-tryptophan biosynthesis; L-tryptophan from chorismate: step 2/5. Functionally, catalyzes the transfer of the phosphoribosyl group of 5-phosphorylribose-1-pyrophosphate (PRPP) to anthranilate to yield N-(5'-phosphoribosyl)-anthranilate (PRA). This Azotobacter vinelandii (strain DJ / ATCC BAA-1303) protein is Anthranilate phosphoribosyltransferase.